The sequence spans 252 residues: 3-dehydroquinate dehydratase (252 aa).

Residues S21, 46-48, and R82 each bind 3-dehydroquinate; that span reads EWR. H143 acts as the Proton donor/acceptor in catalysis. The active-site Schiff-base intermediate with substrate is the K170. 3-dehydroquinate is bound by residues R213, S232, and Q236.

The protein belongs to the type-I 3-dehydroquinase family. In terms of assembly, homodimer.

It carries out the reaction 3-dehydroquinate = 3-dehydroshikimate + H2O. Its pathway is metabolic intermediate biosynthesis; chorismate biosynthesis; chorismate from D-erythrose 4-phosphate and phosphoenolpyruvate: step 3/7. Its function is as follows. Involved in the third step of the chorismate pathway, which leads to the biosynthesis of aromatic amino acids. Catalyzes the cis-dehydration of 3-dehydroquinate (DHQ) and introduces the first double bond of the aromatic ring to yield 3-dehydroshikimate. This is 3-dehydroquinate dehydratase from Escherichia coli O9:H4 (strain HS).